Consider the following 523-residue polypeptide: Dynein regulatory complex subunit 3 (523 aa).

5 LRR repeats span residues 44–65, 66–87, 88–109, 110–131, and 132–153; these read DVLS…WQFE, NLKK…TNLI, HLVW…DTLV, NLED…DALV, and KLQV…IYLR. The LRRCT domain maps to 166 to 204; it reads NPVSEAEEYKMFIYAYLSDLVYLDFRRVDEQMREMAKMK. 2 coiled-coil regions span residues 204-242 and 333-393; these read KHQY…AFVE and LNLN…LVGL.

Belongs to the DRC3 family. Component of the nexin-dynein regulatory complex (N-DRC). Interacts with DRC1. Interacts with TCTE1/DRC5. Interacts with DRC7.

The protein resides in the cytoplasm. Its subcellular location is the cytoskeleton. The protein localises to the cilium axoneme. It localises to the cell projection. It is found in the cilium. The protein resides in the flagellum axoneme. Its subcellular location is the flagellum. Functionally, component of the nexin-dynein regulatory complex (N-DRC) a key regulator of ciliary/flagellar motility which maintains the alignment and integrity of the distal axoneme and regulates microtubule sliding in motile axonemes. The polypeptide is Dynein regulatory complex subunit 3 (Drc3) (Mus musculus (Mouse)).